The primary structure comprises 214 residues: ATP phosphoribosyltransferase (214 aa).

The protein belongs to the ATP phosphoribosyltransferase family. Short subfamily. As to quaternary structure, heteromultimer composed of HisG and HisZ subunits.

It localises to the cytoplasm. It carries out the reaction 1-(5-phospho-beta-D-ribosyl)-ATP + diphosphate = 5-phospho-alpha-D-ribose 1-diphosphate + ATP. The protein operates within amino-acid biosynthesis; L-histidine biosynthesis; L-histidine from 5-phospho-alpha-D-ribose 1-diphosphate: step 1/9. Functionally, catalyzes the condensation of ATP and 5-phosphoribose 1-diphosphate to form N'-(5'-phosphoribosyl)-ATP (PR-ATP). Has a crucial role in the pathway because the rate of histidine biosynthesis seems to be controlled primarily by regulation of HisG enzymatic activity. The sequence is that of ATP phosphoribosyltransferase from Streptococcus gordonii (strain Challis / ATCC 35105 / BCRC 15272 / CH1 / DL1 / V288).